The following is a 117-amino-acid chain: Large ribosomal subunit protein bL20 (117 aa).

Belongs to the bacterial ribosomal protein bL20 family.

In terms of biological role, binds directly to 23S ribosomal RNA and is necessary for the in vitro assembly process of the 50S ribosomal subunit. It is not involved in the protein synthesizing functions of that subunit. The sequence is that of Large ribosomal subunit protein bL20 from Campylobacter jejuni subsp. jejuni serotype O:6 (strain 81116 / NCTC 11828).